Reading from the N-terminus, the 4423-residue chain is Nonribosomal peptide synthetase 7 (4423 aa).

Residues 572-986 are condensation 1; the sequence is NIYPCTSIQE…LISQDDKNRI (415 aa). The tract at residues 1007–1404 is adenylation 1; sequence ERIQKQPSAV…GRRDTQVKIR (398 aa). The region spanning 1533-1609 is the Carrier 1 domain; sequence LPLTETEQKL…DLARTIDERN (77 aa). The residue at position 1570 (Ser-1570) is an O-(pantetheine 4'-phosphoryl)serine. The segment at 1657–2066 is condensation 2; sequence EDVYPCTSLQ…QFLDETHHET (410 aa). The segment at 2102-2499 is adenylation 2; that stretch reads RDVAKEQPDS…YIGRMGSEVK (398 aa). The Carrier 2 domain occupies 2642 to 2718; it reads VPQTRIGKKL…DCARILEADQ (77 aa). An O-(pantetheine 4'-phosphoryl)serine modification is found at Ser-2679. The interval 2764-3170 is condensation 3; the sequence is EDVYPCTPMQ…AASASSDDQT (407 aa). Residues 3205-3609 are adenylation 3; sequence RSLETRPDSQ…GRGDSQIKIR (405 aa). The region spanning 3731–3804 is the Carrier 3 domain; that stretch reads TESEYITRTL…KMAVVAQHQT (74 aa). Ser-3765 bears the O-(pantetheine 4'-phosphoryl)serine mark. Residues 3875-4278 form a condensation 4 region; the sequence is TFVLDAEGDL…SQDEKLALLG (404 aa). Polar residues predominate over residues 4288–4300; that stretch reads KLTKLQRVNSPKE. The segment at 4288–4312 is disordered; sequence KLTKLQRVNSPKEQTLRKDKPTNGV.

It belongs to the NRP synthetase family.

The protein operates within secondary metabolite biosynthesis. Nonribosomal peptide synthetase; part of the gene cluster that mediates the biosynthesis of the lipopeptide fusaristatin A. Fusaristatin A consists of a polyketide chain linked to three amino acid residues glutamine (Gln), dehydroalanine (dehydro-Ala), and beta-aminoisobutyric acid. The biosynthesis starts with formation of a linear polyketide chain by the highly reducing polyketide synthase PKS6. The gene cluster does not contain an acyl-CoA ligase or an acyl-transferase, and it is therefore predicted that the polyketide is transferred directly to the nonribosomal peptide synthetase NRPS7. Modules 1-3 from NRPS7 incorporate dehydro-Ala, Gln, and beta-aminoisobutyric acid in the compound, which is released by cyclization. The beta-aminoisobutyric acid units are most likely not freely available to the NRPS, but can be synthesized from thymine, which requires a dehydrogenase, a monooxygenase, and an aminotransferase. The fusaristatin A cluster contains a cytochrome P450 monooxygenase (FGSG_08207) and an aminotransferase (FGSG_17085), which theoretically can perform two of the enzymatic steps. The enzymes may however also be involved in biosynthesis of dehydroalanine or modification of the polyketide. The dehydro-Ala residue can be a result of cyclization, where serine is dehydrated. The last gene of the cluster encodes a protein with an A/B barrel domain found in variable enzymes, which hampers functional prediction. In Gibberella zeae (strain ATCC MYA-4620 / CBS 123657 / FGSC 9075 / NRRL 31084 / PH-1) (Wheat head blight fungus), this protein is Nonribosomal peptide synthetase 7.